A 428-amino-acid polypeptide reads, in one-letter code: MGCCLTVGPNEALVVSGACCGSDAKTYVVGGWAWAWWLISDTQRITLEIMTLQPKCEDVETAEGVAITVTGVAQVKVMTDQDLLAVACEQFLGKSVMEIKAVVLQTLEGHLRSILGTLTVEQIYQDRDEFARLVREVAAPDVGRMGIEILSFTIKDVYDKLDYLSSLGKTQTAAVQRDADIGVAEAERDAGIREAECKKEMMDVKFLADTRMADSKRELELQKAAFNQEVNTKKAESQLAYELEAAKEQQKIRLEEIEIEVVQRKKQISIEEKEIERTEKELIATVKRPAEAEAYKMQQLAEGQKLKKVLIAQAESEKIRKIGEAEAISISSVGKAEAESMRLKAEAYQQYGEAAKTALVLEALPKIAGKVAAPLARTNEIVILSGDGSRVSGEVNRLLAELPVSINALTGVDLSKMPLLQKMTGAQA.

S-palmitoyl cysteine attachment occurs at residues Cys4, Cys19, and Cys20.

Belongs to the band 7/mec-2 family. Flotillin subfamily. In terms of assembly, heterooligomeric complex of flotillins 1 and 2. Post-translationally, palmitoylation may be required for the formation of higher order complexes and for neurite outgrowth in cultured neural stem cells. As to expression, normally expressed in growing retinal exons of newly differentiated ganglion cells at the retinal margin. After optic nerve injury, expressed in all retinal ganglion cells and retinal axons. Also expressed in endothelial cells, spinal cord, larval and adult skin, muscle processes, thymus and gill macrophages.

It is found in the membrane. The protein localises to the endosome. Its function is as follows. May play a role in axon growth and regeneration. May be involved in epidermal cell adhesion and epidermal structure and function. The sequence is that of Flotillin-2 (flot2) from Carassius auratus (Goldfish).